A 933-amino-acid chain; its full sequence is Collagen alpha-2(I) chain (933 aa).

Over residues 1-16 the composition is skewed to gly residues; sequence SGGFDFGVGLGPGPMG. Disordered stretches follow at residues 1–191 and 206–933; these read SGGF…LTGA and LPGP…AGVR. Over residues 17-53 the composition is skewed to low complexity; sequence LMGPRGPPGASGAPGPQGFQGPAGEPGEPGQTGPAGA. 4-hydroxyproline is present on residues P24 and P30. Over residues 57–72 the composition is skewed to basic and acidic residues; sequence KAGEDGHPGKPGRPGE. K94 is subject to 5-hydroxylysine; alternate. O-linked (Gal...) hydroxylysine; alternate glycosylation occurs at K94. Low complexity-rich tracts occupy residues 108 to 137, 162 to 176, and 213 to 228; these read VGAPGPAGARGSDGSVGPVGPAGPIGSAGP, AGPRGEQGLPGVSGP, and PGPVGAVGATGARGLV. Residues 280-289 are compositionally biased toward gly residues; the sequence is GLRGGPGSRG. 2 positions are modified to 4-hydroxyproline: P317 and P320. Residues 413-422 show a composition bias toward gly residues; the sequence is GVQGGKGEQG. Composition is skewed to low complexity over residues 468 to 485 and 497 to 507; these read PGESGAAGPVGPIGSRGP and EPGVVGAPGTA. Gly residues predominate over residues 508–517; the sequence is GPAGSGGLPG. 3 stretches are compositionally biased toward low complexity: residues 540 to 584, 591 to 611, and 627 to 640; these read VGTT…PRGS, VGPAGPNGFAGPAGAAGQPGA, and PTGPVGAAGPSGPN. Gly residues predominate over residues 644-656; sequence GPAGGRGDGGPPG. A compositionally biased stretch (low complexity) spans 657 to 667; it reads LTGFPGAAGRT. Residues 704–713 show a composition bias toward gly residues; the sequence is GETGAGGPPG. Composition is skewed to low complexity over residues 721 to 748 and 756 to 781; these read SGEPGTAGPPGTAGPQGLLGAPGILGLP and LPGVAGAVGEPGPLGISGPPGARGPS. Positions 795–807 are enriched in basic and acidic residues; sequence AGRDGLPGHKGER. Composition is skewed to low complexity over residues 809–831 and 840–860; these read YAGNAGPVGAAGAPGPHGSVGPA and PGPAGSVGPVGAVGPRGPSGP. A compositionally biased stretch (basic and acidic residues) spans 864–874; sequence RGDKGEGDKGP.

This sequence belongs to the fibrillar collagen family. As to quaternary structure, trimers of one alpha 2(I) and two alpha 1(I) chains. Interacts (via C-terminus) with TMEM131 (via PapD-L domain); the interaction is direct and is involved in assembly and TRAPPIII ER-to-Golgi transport complex-dependent secretion of collagen. Post-translationally, prolines at the third position of the tripeptide repeating unit (G-X-Y) are hydroxylated in some or all of the chains. In terms of tissue distribution, expressed in bones.

The protein localises to the secreted. It localises to the extracellular space. The protein resides in the extracellular matrix. Type I collagen is a member of group I collagen (fibrillar forming collagen). This Glyptodon sp. (strain SLP-2019) (Giant armadillo) protein is Collagen alpha-2(I) chain.